Consider the following 589-residue polypeptide: uncharacterized protein (589 aa).

Transmembrane regions (helical) follow at residues 11 to 31, 57 to 77, 97 to 117, 190 to 210, and 213 to 233; these read LNWILTALFWVVLCFSVTMLA, LILMLLVLFIMILLEVRFSVL, FWFFAKLNALLVVAQVIHAIA, IEFTIILWSLSGVLTLFGFNI, and GVVFFIYAFIIFATLMSVWIG. One can recognise an ABC transmembrane type-1 domain in the interval 57–357; that stretch reads LILMLLVLFI…FRLFYEQFTL (301 aa). One can recognise an ABC transporter domain in the interval 390–587; it reads VALKNFGIKD…QLKLDVCLLC (198 aa). 423-430 provides a ligand contact to ATP; that stretch reads GASGTGKT.

This sequence belongs to the ABC transporter superfamily.

It localises to the cell inner membrane. This is an uncharacterized protein from Haemophilus influenzae (strain ATCC 51907 / DSM 11121 / KW20 / Rd).